A 256-amino-acid chain; its full sequence is Pimeloyl-[acyl-carrier protein] methyl ester esterase (256 aa).

Residues 15-242 form the AB hydrolase-1 domain; it reads HLVLLHGWGL…AAHAPFISHP (228 aa). Residues Trp-22, 82–83, and 143–147 contribute to the substrate site; these read SL and FLALQ. The active-site Nucleophile is Ser-82. Residues Asp-207 and His-235 contribute to the active site. His-235 contacts substrate.

This sequence belongs to the AB hydrolase superfamily. Carboxylesterase BioH family. As to quaternary structure, monomer.

Its subcellular location is the cytoplasm. It catalyses the reaction 6-carboxyhexanoyl-[ACP] methyl ester + H2O = 6-carboxyhexanoyl-[ACP] + methanol + H(+). The protein operates within cofactor biosynthesis; biotin biosynthesis. The physiological role of BioH is to remove the methyl group introduced by BioC when the pimeloyl moiety is complete. It allows to synthesize pimeloyl-ACP via the fatty acid synthetic pathway through the hydrolysis of the ester bonds of pimeloyl-ACP esters. The protein is Pimeloyl-[acyl-carrier protein] methyl ester esterase of Salmonella choleraesuis (strain SC-B67).